Reading from the N-terminus, the 461-residue chain is Ribitol-5-phosphate transferase FKTN (461 aa).

Topologically, residues 1-7 are cytoplasmic; that stretch reads MSRINKN. The segment at 6–27 is required and sufficient for interaction with POMGNT1; sequence KNVVLALLTLTSSAFLLFQLYY. A helical; Signal-anchor for type II membrane protein transmembrane segment spans residues 8–28; that stretch reads VVLALLTLTSSAFLLFQLYYY. At 29–461 the chain is on the lumenal side; it reads KHYLSTKNGA…SEWDEVIQLY (433 aa). N-linked (GlcNAc...) asparagine glycosylation occurs at Asn-92.

The protein belongs to the LicD transferase family. As to quaternary structure, forms a complex composed of FKTN/fukutin, FKRP and RXYLT1/TMEM5. Interacts (via transmembrane domain) with POMGNT1; the interaction is direct and is required for normal POMGNT1 location in Golgi membranes. As to expression, expressed in the retina (at protein level). Widely expressed with highest expression in brain, heart, pancreas and skeletal muscle. Expressed at similar levels in control fetal and adult brain. Expressed in migrating neurons, including Cajar-Retzius cells and adult cortical neurons, as well as hippocampal pyramidal cells and cerebellar Purkinje cells. No expression observed in the glia limitans, the subpial astrocytes (which contribute to basement membrane formation) or other glial cells.

It is found in the golgi apparatus membrane. The protein resides in the cytoplasm. Its subcellular location is the nucleus. It carries out the reaction 3-O-[beta-D-GalNAc-(1-&gt;3)-beta-D-GlcNAc-(1-&gt;4)-(O-6-P-alpha-D-Man)]-Thr-[protein] + CDP-L-ribitol = 3-O-[Rib-ol-P-3-beta-D-GalNAc-(1-&gt;3)-beta-D-GlcNAc-(1-&gt;4)-(O-6-P-alpha-D-Man)]-Thr-[protein] + CMP + H(+). It functions in the pathway protein modification; protein glycosylation. In terms of biological role, catalyzes the transfer of a ribitol-phosphate from CDP-ribitol to the distal N-acetylgalactosamine of the phosphorylated O-mannosyl trisaccharide (N-acetylgalactosamine-beta-3-N-acetylglucosamine-beta-4-(phosphate-6-)mannose), a carbohydrate structure present in alpha-dystroglycan (DAG1). This constitutes the first step in the formation of the ribitol 5-phosphate tandem repeat which links the phosphorylated O-mannosyl trisaccharide to the ligand binding moiety composed of repeats of 3-xylosyl-alpha-1,3-glucuronic acid-beta-1. Required for normal location of POMGNT1 in Golgi membranes, and for normal POMGNT1 activity. May interact with and reinforce a large complex encompassing the outside and inside of muscle membranes. Could be involved in brain development. This is Ribitol-5-phosphate transferase FKTN from Homo sapiens (Human).